A 386-amino-acid polypeptide reads, in one-letter code: Patatin group M-2 (386 aa).

The signal sequence occupies residues 1–23 (MATTKSFLILFFMILATTSSTCA). The PNPLA domain maps to 32 to 229 (LSIDGGGIKG…TVGDPALLSL (198 aa)). The GXGXXG motif lies at 36 to 41 (GGGIKG). The short motif at 75–79 (GTSTG) is the GXSXG element. The active-site Nucleophile is the Ser-77. An N-linked (GlcNAc...) asparagine glycan is attached at Asn-115. Residue Asp-215 is the Proton acceptor of the active site. Residues 215 to 217 (DGG) carry the DGA/G motif. Residues 321–384 (ENALTGTTTE…DRKKLRANKA (64 aa)) adopt a coiled-coil conformation.

Belongs to the patatin family. Tuber.

It is found in the vacuole. Functionally, probable lipolytic acyl hydrolase (LAH), an activity which is thought to be involved in the response of tubers to pathogens. The polypeptide is Patatin group M-2 (Solanum tuberosum (Potato)).